The sequence spans 205 residues: Ras-related protein rab-6.2 (205 aa).

GTP contacts are provided by residues 18–25, T42, 66–70, and 124–127; these read EQSVGKTS, TAGQE, and KTDL. 2 S-geranylgeranyl cysteine lipidation sites follow: C203 and C205. C205 bears the Cysteine methyl ester mark.

The protein belongs to the small GTPase superfamily. Rab family. In terms of assembly, interacts with GARP complex component vps-52. Interacts (in GTP-bound form) with lin-10. May interact (in GTP-bound form) with eat-17. In terms of tissue distribution, highly expressed in body wall muscles, pharyngeal and vulval muscles, hypodermis, intestine, the gonad, coelomocytes, and neurons, including command interneuron (at protein level). Highly expressed in the terminal bulb muscles.

It localises to the perikaryon. Its subcellular location is the cell projection. The protein resides in the dendrite. It is found in the golgi apparatus. The protein localises to the cytoplasmic vesicle. Its function is as follows. The small GTPases Rab are key regulators of intracellular membrane trafficking, from the formation of transport vesicles to their fusion with membranes. Rabs cycle between an inactive GDP-bound form and an active GTP-bound form that is able to recruit to membranes different set of downstream effectors directly responsible for vesicle formation, movement, tethering and fusion. In its active GTP-bound form, acts redundantly with rab-6.1 (in its active GTP-bound form) to positively regulate the retrograde trafficking of cargo molecules from endosomes to the Golgi compartment. Required for the retrograde trafficking of glr-1, a subunit of AMPA-type glutamate receptors (AMPRs), out of early endosomes and into the Golgi compartment in neurons. Its role in glr-1 trafficking may partly be mediated by its interaction with lin-10 and association with components of the retromer complex such as rme-8. Together with rab-6.2, promotes the retrograde trafficking of mig-14 from endosomes to Golgi structures in the intestine. Plays a role in the epidermis to promote cuticle integrity and impermeability of the cuticle barrier to exogenous molecules. May have a role in the glycosylation of the cuticular surface. Required for seam cell division and alae formation. Required for grinder formation, which is the feeding organ that breaks down food. In contrast to rab-6.1, may play a minor role in the exocytosis of secretory vesicles (cortical granules) during the oocyte-to-embryo transition. This is Ras-related protein rab-6.2 from Caenorhabditis elegans.